Reading from the N-terminus, the 67-residue chain is ATP synthase protein 8 (67 aa).

The helical transmembrane segment at 8–24 (TWFITITSMTITLFIMF) threads the bilayer. Lys54 bears the N6-acetyllysine; alternate mark. At Lys54 the chain carries N6-succinyllysine; alternate. Lys57 is modified (N6-acetyllysine).

The protein belongs to the ATPase protein 8 family. F-type ATPases have 2 components, CF(1) - the catalytic core - and CF(0) - the membrane proton channel. Component of an ATP synthase complex composed of ATP5PB, ATP5MC1, ATP5F1E, ATP5PD, ATP5ME, ATP5PF, ATP5MF, MT-ATP6, MT-ATP8, ATP5F1A, ATP5F1B, ATP5F1D, ATP5F1C, ATP5PO, ATP5MG, ATP5MK and ATP5MJ. Interacts with PRICKLE3.

Its subcellular location is the mitochondrion membrane. Its function is as follows. Mitochondrial membrane ATP synthase (F(1)F(0) ATP synthase or Complex V) produces ATP from ADP in the presence of a proton gradient across the membrane which is generated by electron transport complexes of the respiratory chain. F-type ATPases consist of two structural domains, F(1) - containing the extramembraneous catalytic core and F(0) - containing the membrane proton channel, linked together by a central stalk and a peripheral stalk. During catalysis, ATP synthesis in the catalytic domain of F(1) is coupled via a rotary mechanism of the central stalk subunits to proton translocation. Part of the complex F(0) domain. Minor subunit located with subunit a in the membrane. This is ATP synthase protein 8 (MT-ATP8) from Rhinoceros unicornis (Greater Indian rhinoceros).